The following is a 158-amino-acid chain: Urease subunit beta (158 aa).

Residues 113–158 (EDDWRRSSAAGDAPQELPQVEAAERGRKLDEATDVGTEDTPEEGQN) form a disordered region. Residues 134–143 (AAERGRKLDE) show a composition bias toward basic and acidic residues. Over residues 144–158 (ATDVGTEDTPEEGQN) the composition is skewed to acidic residues.

It belongs to the urease beta subunit family. In terms of assembly, heterotrimer of UreA (gamma), UreB (beta) and UreC (alpha) subunits. Three heterotrimers associate to form the active enzyme.

Its subcellular location is the cytoplasm. The enzyme catalyses urea + 2 H2O + H(+) = hydrogencarbonate + 2 NH4(+). Its pathway is nitrogen metabolism; urea degradation; CO(2) and NH(3) from urea (urease route): step 1/1. The sequence is that of Urease subunit beta from Corynebacterium glutamicum (strain R).